Here is a 412-residue protein sequence, read N- to C-terminus: Aspartate aminotransferase, cytoplasmic (412 aa).

Residue alanine 2 is modified to N-acetylalanine. Residues glycine 38, tryptophan 140, and asparagine 194 each contribute to the L-aspartate site. Residue lysine 258 is modified to N6-(pyridoxal phosphate)lysine. Arginine 386 contacts L-aspartate.

It belongs to the class-I pyridoxal-phosphate-dependent aminotransferase family. As to quaternary structure, homodimer. Pyridoxal 5'-phosphate is required as a cofactor.

It is found in the cytoplasm. It carries out the reaction L-aspartate + 2-oxoglutarate = oxaloacetate + L-glutamate. It catalyses the reaction L-cysteine + 2-oxoglutarate = 2-oxo-3-sulfanylpropanoate + L-glutamate. The catalysed reaction is (2S)-2-aminobutanoate + 2-oxoglutarate = 2-oxobutanoate + L-glutamate. The enzyme catalyses 3-sulfino-L-alanine + 2-oxoglutarate = 3-sulfinopyruvate + L-glutamate. In terms of biological role, biosynthesis of L-glutamate from L-aspartate or L-cysteine. Important regulator of levels of glutamate, the major excitatory neurotransmitter of the vertebrate central nervous system. Acts as a scavenger of glutamate in brain neuroprotection. The aspartate aminotransferase activity is involved in hepatic glucose synthesis during development and in adipocyte glyceroneogenesis. Using L-cysteine as substrate, regulates levels of mercaptopyruvate, an important source of hydrogen sulfide. Mercaptopyruvate is converted into H(2)S via the action of 3-mercaptopyruvate sulfurtransferase (3MST). Hydrogen sulfide is an important synaptic modulator and neuroprotectant in the brain. This chain is Aspartate aminotransferase, cytoplasmic, found in Gallus gallus (Chicken).